Here is an 860-residue protein sequence, read N- to C-terminus: Ubiquitin carboxyl-terminal hydrolase 13 (860 aa).

Residues Q168–M276 form a UBP-type; degenerate zinc finger. The Zn(2+) site is built by C192, C195, C212, and H225. The USP domain occupies T318 to L857. The active-site Nucleophile is the C327. The tract at residues D611–I636 is disordered. UBA domains follow at residues E635–H676 and Q710–H750. Positions D755–P768 are enriched in acidic residues. Residues D755–V795 are disordered. Over residues N769–T780 the composition is skewed to polar residues. Over residues D781–P793 the composition is skewed to low complexity. The active-site Proton acceptor is the H819.

It belongs to the peptidase C19 family.

It catalyses the reaction Thiol-dependent hydrolysis of ester, thioester, amide, peptide and isopeptide bonds formed by the C-terminal Gly of ubiquitin (a 76-residue protein attached to proteins as an intracellular targeting signal).. Its activity is regulated as follows. Specifically inhibited by spautin-1 (specific and potent autophagy inhibitor-1), a derivative of MBCQ that binds to usp13 and inhibits deubiquitinase activity. Its function is as follows. Deubiquitinase that mediates deubiquitination of target proteins and is involved in various processes such as autophagy and endoplasmic reticulum-associated degradation (ERAD). The chain is Ubiquitin carboxyl-terminal hydrolase 13 (usp13) from Danio rerio (Zebrafish).